Reading from the N-terminus, the 545-residue chain is Thermosome subunit alpha (545 aa).

The segment at 522–545 (KKSTPPSGQGGQGQGMPGGGMPEY) is disordered. Positions 529-545 (GQGGQGQGMPGGGMPEY) are enriched in gly residues.

The protein belongs to the TCP-1 chaperonin family. As to quaternary structure, forms a Heterooligomeric complex of two stacked eight-membered rings. In terms of processing, the N-terminus is blocked.

Functionally, molecular chaperone; binds unfolded polypeptides in vitro, and has a weak ATPase activity. In Thermoplasma acidophilum (strain ATCC 25905 / DSM 1728 / JCM 9062 / NBRC 15155 / AMRC-C165), this protein is Thermosome subunit alpha (thsA).